Here is a 793-residue protein sequence, read N- to C-terminus: Plakophilin-3 (793 aa).

The interval glutamine 56–alanine 82 is disordered. Low complexity predominate over residues proline 66–alanine 82. Omega-N-methylarginine is present on arginine 81. Serine 122, serine 179, and serine 182 each carry phosphoserine. Tyrosine 194 bears the Phosphotyrosine mark. Residues serine 221 to arginine 240 are disordered. The residue at position 239 (serine 239) is a Phosphoserine. At threonine 249 the chain carries Phosphothreonine. The residue at position 260 (arginine 260) is an Omega-N-methylarginine. Residues serine 282, serine 310, serine 311, and serine 328 each carry the phosphoserine modification. The segment at serine 282–leucine 285 is required for interaction with SFN. A required for interaction with GSK3B region spans residues leucine 291–valine 720. ARM repeat units follow at residues glycine 302 to tyrosine 345, alanine 348 to tyrosine 387, alanine 390 to serine 429, threonine 446 to serine 484, alanine 488 to tyrosine 533, proline 592 to alanine 633, valine 641 to arginine 680, and lysine 685 to valine 726. The segment at valine 513–proline 793 is required for binding to PKP2 mRNA.

It belongs to the beta-catenin family. In terms of assembly, found in a complex composed of CDH1, RAP1A and PKP3; PKP3 acts as a scaffold protein within the complex, the complex is required for CDH1 localization to mature desmosome cell junctions. Interacts with FXR1; the interaction facilitates the binding of PKP3 to PKP2 mRNA. Interacts (via ARM repeats) with GSK3B; the interaction may be involved in PKP3 protein degradation. Interacts with hyperphosphorylated and hypophosphorylated RB1; the interaction inhibits RB1 interaction with and repression of the transcription factor E2F1, potentially via sequestering RB1 to the cytoplasm. Interacts with CDKN1A; the interaction sequesters CDKN1A to the cytoplasm thereby repressing its role as an inhibitor of CDK4- and CDK6-driven RB1 phosphorylation. Interacts (via N-terminus) with SFN; the interaction maintains the cytoplasmic pool of PKP3, facilitates PKP3 exchange at desmosomes and restricts PKP3 localization to existing desmosome cell junctions. Interacts (via N-terminus) with SFN; the interaction maintains the cytoplasmic pool of PKP3 and restricts PKP3 localization to existing desmosome cell junctions. Interacts (via N-terminus) with JUP; the interaction is required for PKP3 localization to desmosome cell-cell junctions. Phosphorylated at Ser-282 when localized to the cytoplasm, PKP3 at desmosome cell junctions is not phosphorylated. Phosphorylation at Try-194 by SRC is induced by reactive oxygen species and potentially acts as a release mechanism from desmosome cell-cell junctions.

The protein resides in the nucleus. The protein localises to the cell junction. Its subcellular location is the desmosome. It is found in the cytoplasm. It localises to the cell membrane. The protein resides in the adherens junction. In terms of biological role, a component of desmosome cell-cell junctions which are required for positive regulation of cellular adhesion. Required for the localization of DSG2, DSP and PKP2 to mature desmosome junctions. May also play a role in the maintenance of DSG3 protein abundance in keratinocytes. Required for the formation of DSP-containing desmosome precursors in the cytoplasm during desmosome assembly. Also regulates the accumulation of CDH1 to mature desmosome junctions, via cAMP-dependent signaling and its interaction with activated RAP1A. Positively regulates the stabilization of PKP2 mRNA and therefore protein abundance, via its interaction with FXR1, may also regulate the protein abundance of DSP via the same mechanism. May also regulate the protein abundance of the desmosome component PKP1. Required for the organization of desmosome junctions at intercellular borders between basal keratinocytes of the epidermis, as a result plays a role in maintenance of the dermal barrier and regulation of the dermal inflammatory response. Required during epidermal keratinocyte differentiation for cell adherence at tricellular cell-cell contacts, via regulation of the timely formation of adherens junctions and desmosomes in a calcium-dependent manner, and may also play a role in the organization of the intracellular actin fiber belt. Acts as a negative regulator of the inflammatory response in hematopoietic cells of the skin and intestine, via modulation of proinflammatory cytokine production. Important for epithelial barrier maintenance in the intestine to reduce intestinal permeability, thereby plays a role in protection from intestinal-derived endotoxemia. Required for the development of hair follicles, via a role in the regulation of inner root sheaf length, correct alignment and anterior-posterior polarity of hair follicles. Promotes proliferation and cell-cycle G1/S phase transition of keratinocytes. Promotes E2F1-driven transcription of G1/S phase promoting genes by acting to release E2F1 from its inhibitory interaction with RB1, via sequestering RB1 and CDKN1A to the cytoplasm and thereby increasing CDK4- and CDK6-driven phosphorylation of RB1. May act as a scaffold protein to facilitate MAPK phosphorylation of RPS6KA protein family members and subsequently promote downstream EGFR signaling. May play a role in the positive regulation of transcription of Wnt-mediated TCF-responsive target genes. This chain is Plakophilin-3 (PKP3), found in Bos taurus (Bovine).